Reading from the N-terminus, the 279-residue chain is MIVIHSVAQMQQYARDKRGEIALVPTMGYLHEGHASLMVEARKRAKYVVASIFVNPTQFGVNEDLDSYPRDLEHDKEIAAKAGVDVIFAPIAAEMYPEGYQSYLNVEEISAHLCGASRPGHFRGVTTVVAKLFNIVAPKVALFGKKDFQQLAVLRRMVQDFNFDLEIVGMPIVREADGLAMSSRNTKLSPVEREKALCLSRSIAAAKAAFRGGERSVAALQKVAAAVIEGEKSPQIDYLEFRDQDSLLPLDKADERTLLALAVRVGSVRLIDNSILGED.

27 to 34 (MGYLHEGH) lines the ATP pocket. The Proton donor role is filled by histidine 34. Position 58 (glutamine 58) interacts with (R)-pantoate. Glutamine 58 contributes to the beta-alanine binding site. Residue 144 to 147 (GKKD) coordinates ATP. Glutamine 150 provides a ligand contact to (R)-pantoate. Residues valine 173 and 181–184 (MSSR) contribute to the ATP site.

Belongs to the pantothenate synthetase family. As to quaternary structure, homodimer.

Its subcellular location is the cytoplasm. It carries out the reaction (R)-pantoate + beta-alanine + ATP = (R)-pantothenate + AMP + diphosphate + H(+). The protein operates within cofactor biosynthesis; (R)-pantothenate biosynthesis; (R)-pantothenate from (R)-pantoate and beta-alanine: step 1/1. Functionally, catalyzes the condensation of pantoate with beta-alanine in an ATP-dependent reaction via a pantoyl-adenylate intermediate. This is Pantothenate synthetase from Citrifermentans bemidjiense (strain ATCC BAA-1014 / DSM 16622 / JCM 12645 / Bem) (Geobacter bemidjiensis).